The following is a 312-amino-acid chain: Phospholipid phosphatase 3 (312 aa).

At 1-33 (MQSYKYDKAIVPESKNGGSPALNNNPRKGGSKR) the chain is on the cytoplasmic side. Ser-19 is modified (phosphoserine). A helical membrane pass occupies residues 34–54 (VLLICLDLFCLFMAALPFLII). Residues 55 to 85 (ETSTIKPYRRGFYCNDESIKYPLKVSETIND) lie on the Extracellular side of the membrane. The helical transmembrane segment at 86 to 106 (AVLCAVGIVIAILRIITGEFY) threads the bilayer. Topologically, residues 107–123 (RIYYLKEKSRSTIQNPY) are cytoplasmic. Positions 109–110 (YY) match the Dityrosine basolateral targeting motif motif. A helical membrane pass occupies residues 124–144 (VAALYKQVGCFLFGCAISQSF). Residues 145–194 (TDIAKVSIGRLRPHFLSVCDPDFSQINCSEGYIQNYRCRGEDSKVQEARK) are Extracellular-facing. The interval 149-157 (KVSIGRLRP) is phosphatase sequence motif I. Residue Asn-171 is glycosylated (N-linked (GlcNAc...) asparagine). The short motif at 183-185 (RGE) is the Integrin-binding motif element. Residues 195–215 (SFFSGHASFSMFTMLYLVLYL) traverse the membrane as a helical segment. The segment at 197–200 (FSGH) is phosphatase sequence motif II. The active-site Proton donors is the His-200. The Cytoplasmic portion of the chain corresponds to 216-226 (QARFTWRGARL). A helical transmembrane segment spans residues 227–244 (LRPLLQFTLLMMAFYTGL). The phosphatase sequence motif III stretch occupies residues 245–256 (SRVSDYKHHPSD). The Extracellular portion of the chain corresponds to 245 to 258 (SRVSDYKHHPSDVL). His-252 (nucleophile) is an active-site residue. The helical transmembrane segment at 259–279 (AGFAQGALVACCIVFFVSDLF) threads the bilayer. The interval 276–312 (SDLFKTKTTLSLPAPAIRREILSPVDIMDRSNHHNMV) is mediates interaction with CTNND1. Over 280–312 (KTKTTLSLPAPAIRREILSPVDIMDRSNHHNMV) the chain is Cytoplasmic.

This sequence belongs to the PA-phosphatase related phosphoesterase family. As to quaternary structure, forms functional homodimers and homooligomers that are not required for substrate recognition and catalytic activity. Can also form heterooligomers with other PLPP2 and PLPP3. Interacts with CTNND1; negatively regulates the PLPP3-mediated stabilization of beta-catenin/CTNNB1. N-glycosylated. Contains high-mannose oligosaccharides. In terms of tissue distribution, detected in epithelial cells of intestinal mucosa, lung, liver and brain.

The protein resides in the cell membrane. It localises to the basolateral cell membrane. Its subcellular location is the endoplasmic reticulum membrane. It is found in the endoplasmic reticulum-Golgi intermediate compartment membrane. The protein localises to the golgi apparatus membrane. The protein resides in the golgi apparatus. It localises to the trans-Golgi network membrane. Its subcellular location is the membrane raft. The enzyme catalyses a 1,2-diacyl-sn-glycero-3-phosphate + H2O = a 1,2-diacyl-sn-glycerol + phosphate. It catalyses the reaction 1,2-dihexadecanoyl-sn-glycero-3-phosphate + H2O = 1,2-dihexadecanoyl-sn-glycerol + phosphate. It carries out the reaction 1,2-di-(9Z-octadecenoyl)-sn-glycero-3-phosphate + H2O = 1,2-di-(9Z-octadecenoyl)-sn-glycerol + phosphate. The catalysed reaction is a monoacyl-sn-glycero-3-phosphate + H2O = a monoacylglycerol + phosphate. The enzyme catalyses (9Z)-octadecenoyl-sn-glycero-3-phosphate + H2O = (9Z-octadecenoyl)-glycerol + phosphate. It catalyses the reaction sphing-4-enine 1-phosphate + H2O = sphing-4-enine + phosphate. It carries out the reaction an N-acylsphing-4-enine 1-phosphate + H2O = an N-acylsphing-4-enine + phosphate. The catalysed reaction is N-(octanoyl)-sphing-4-enine-1-phosphate + H2O = N-octanoylsphing-4-enine + phosphate. The enzyme catalyses N-(9Z-octadecenoyl)-ethanolamine phosphate + H2O = N-(9Z-octadecenoyl) ethanolamine + phosphate. It functions in the pathway lipid metabolism; phospholipid metabolism. Its activity is regulated as follows. Magnesium-independent phospholipid phosphatase. Insensitive to N-ethylmaleimide. Inhibited by sphingosine, zinc ions and modestly by propanolol. Its function is as follows. Magnesium-independent phospholipid phosphatase of the plasma membrane that catalyzes the dephosphorylation of a variety of glycerolipid and sphingolipid phosphate esters including phosphatidate/PA, lysophosphatidate/LPA, diacylglycerol pyrophosphate/DGPP, sphingosine 1-phosphate/S1P and ceramide 1-phosphate/C1P. Also acts on N-oleoyl ethanolamine phosphate/N-(9Z-octadecenoyl)-ethanolamine phosphate, a potential physiological compound. Has both an extracellular and an intracellular phosphatase activity, allowing the hydrolysis and the cellular uptake of these bioactive lipid mediators from the milieu, regulating signal transduction in different cellular processes. Through the dephosphorylation of extracellular sphingosine-1-phosphate and the regulation of its extra- and intracellular availability, plays a role in vascular homeostasis, regulating endothelial cell migration, adhesion, survival, proliferation and the production of pro-inflammatory cytokines. By maintaining the appropriate levels of this lipid in the cerebellum, also ensure its proper development and function. Through its intracellular lipid phosphatase activity may act in early compartments of the secretory pathway, regulating the formation of Golgi to endoplasmic reticulum retrograde transport carriers. Independently of this phosphatase activity may also function in the Wnt signaling pathway and the stabilization of beta-catenin/CTNNB1, thereby regulating cell proliferation, migration and differentiation in angiogenesis or yet in tumor growth. Also plays a role in integrin-mediated cell-cell adhesion in angiogenesis. In Rattus norvegicus (Rat), this protein is Phospholipid phosphatase 3.